Consider the following 448-residue polypeptide: NK1 transcription factor-related protein 1 (448 aa).

A compositionally biased stretch (low complexity) spans 1 to 13 (MSASGPEAPGDIP). Disordered stretches follow at residues 1–80 (MSAS…LRPT), 115–299 (ASAP…PRRA), and 350–397 (KWKK…GAPL). Residues 14 to 30 (ALPPPPQPGSGPAPPAP) are compositionally biased toward pro residues. 2 stretches are compositionally biased toward low complexity: residues 62-79 (PAAP…PLRP) and 115-129 (ASAP…SGRP). A compositionally biased stretch (basic and acidic residues) spans 130-139 (PRAEELERRA). Acidic residues predominate over residues 186 to 203 (SGDEVPDDEDDDEDEAPE). Residues 205–214 (EAARGAEEAR) are compositionally biased toward basic and acidic residues. Gly residues-rich tracts occupy residues 215–227 (GGGG…GSGC) and 259–270 (PPGGAAAPGGAG). The segment covering 271 to 280 (TTPQGTATAA) has biased composition (low complexity). The homeobox DNA-binding region spans 296-355 (PRRARTAFTYEQLVALENKFKATRYLSVCERLNLALSLSLTETQVKIWFQNRRTKWKKQN). The segment covering 364-382 (TGGGGGPGPGAGPGTGLPG) has biased composition (gly residues).

Belongs to the NK-1 homeobox family. As to expression, expressed in hemopoietic progenitor cells.

It is found in the nucleus. May be required for the coordinated crosstalk of factors involved in the maintenance of energy homeostasis, possibly by regulating the transcription of specific factors involved in energy balance. The sequence is that of NK1 transcription factor-related protein 1 from Homo sapiens (Human).